Here is a 77-residue protein sequence, read N- to C-terminus: U8-lycotoxin-Ls1v (77 aa).

An N-terminal signal peptide occupies residues 1-20; it reads MKLIIFTGLVLFGIVSLIEA. The propeptide occupies 21-26; that stretch reads QAENEK.

Belongs to the neurotoxin 19 (CSTX) family. 08 (U8-Lctx) subfamily. In terms of processing, contains 4 disulfide bonds. In terms of tissue distribution, expressed by the venom gland.

The protein resides in the secreted. The polypeptide is U8-lycotoxin-Ls1v (Lycosa singoriensis (Wolf spider)).